Reading from the N-terminus, the 189-residue chain is Glucose-6-phosphate isomerase (189 aa).

Fe cation is bound by residues His88, His90, Glu97, and His136.

It belongs to the archaeal-type GPI family. Homodimer. The cofactor is Fe cation.

It localises to the cytoplasm. The catalysed reaction is alpha-D-glucose 6-phosphate = beta-D-fructose 6-phosphate. It functions in the pathway carbohydrate degradation; glycolysis; D-glyceraldehyde 3-phosphate and glycerone phosphate from D-glucose: step 2/4. The polypeptide is Glucose-6-phosphate isomerase (pgiA) (Pyrococcus horikoshii (strain ATCC 700860 / DSM 12428 / JCM 9974 / NBRC 100139 / OT-3)).